A 156-amino-acid chain; its full sequence is Cyclic pyranopterin monophosphate synthase (156 aa).

Substrate contacts are provided by residues 75–77 and 111–112; these read LCH and ME. The active site involves aspartate 126.

The protein belongs to the MoaC family. Homohexamer; trimer of dimers.

The enzyme catalyses (8S)-3',8-cyclo-7,8-dihydroguanosine 5'-triphosphate = cyclic pyranopterin phosphate + diphosphate. It participates in cofactor biosynthesis; molybdopterin biosynthesis. Catalyzes the conversion of (8S)-3',8-cyclo-7,8-dihydroguanosine 5'-triphosphate to cyclic pyranopterin monophosphate (cPMP). The chain is Cyclic pyranopterin monophosphate synthase from Corynebacterium glutamicum (strain R).